The primary structure comprises 487 residues: MAVESRSRVTSKLVKAHRAMLNSVTQEDLKVDRLPGADYPNPSKKYSSRTEFRDKTDYIMYNPRPRDEPSSENPVSVSPLLCELAAARSRIHFNPTETTIGIVTCGGICPGLNDVIRSITLTGINVYNVKRVIGFRFGYWGLSKKGSQTAIELHRGRVTNIHHYGGTILGSSRGPQDPKEMVDTLERLGVNILFTVGGDGTQRGALVISQEAKRRGVDISVFGVPKTIDNDLSFSHRTFGFQTAVEKAVQAIRAAYAEAVSANYGVGVVKLMGRDSGFIAAQAAVASAQANICLVPENPISEQEVMSLLERRFCHSRSCVIIVAEGFGQDWGRGSGGYDASGNKKLIDIGVILTEKVKAFLKANKSRYPDSTVKYIDPSYMIRACPPSANDALFCATLATLAVHEAMAGATGCIIAMRHNNYILVPIKVATSVRRVLDLRGQLWRQVREITVDLGSDVRLARKLEIRRELEAINRNRDRLHEELAKL.

ATP is bound by residues glycine 107, 173–174 (RG), 198–201 (GDGT), and lysine 226. Aspartate 199 provides a ligand contact to Mg(2+). Residues 227–229 (TID), 272–274 (MGR), and glutamate 325 contribute to the substrate site. Aspartate 229 serves as the catalytic Proton acceptor. 341–343 (SGN) provides a ligand contact to ATP. 380-383 (YMIR) provides a ligand contact to substrate. The short motif at 485–487 (AKL) is the Peroxisomal targeting signal element.

This sequence belongs to the phosphofructokinase type A (PFKA) family. PPi-dependent PFK group II subfamily. Atypical ATP-dependent clade 'X' sub-subfamily. Homotetramer. It depends on Mg(2+) as a cofactor.

The protein resides in the glycosome. The enzyme catalyses beta-D-fructose 6-phosphate + ATP = beta-D-fructose 1,6-bisphosphate + ADP + H(+). The protein operates within carbohydrate degradation; glycolysis; D-glyceraldehyde 3-phosphate and glycerone phosphate from D-glucose: step 3/4. Its activity is regulated as follows. Allosterically activated by AMP. Its function is as follows. Catalyzes the phosphorylation of D-fructose 6-phosphate to fructose 1,6-bisphosphate by ATP, the first committing step of glycolysis. The protein is ATP-dependent 6-phosphofructokinase of Trypanosoma brucei brucei.